The sequence spans 221 residues: 7-cyano-7-deazaguanine synthase (221 aa).

Phe12–Leu22 contacts ATP. 4 residues coordinate Zn(2+): Cys190, Cys199, Cys202, and Cys205.

Belongs to the QueC family. In terms of assembly, homodimer. It depends on Zn(2+) as a cofactor.

It catalyses the reaction 7-carboxy-7-deazaguanine + NH4(+) + ATP = 7-cyano-7-deazaguanine + ADP + phosphate + H2O + H(+). It participates in purine metabolism; 7-cyano-7-deazaguanine biosynthesis. In terms of biological role, catalyzes the ATP-dependent conversion of 7-carboxy-7-deazaguanine (CDG) to 7-cyano-7-deazaguanine (preQ(0)). This Clostridium novyi (strain NT) protein is 7-cyano-7-deazaguanine synthase.